The sequence spans 189 residues: Putative OVARIAN TUMOR DOMAIN-containing deubiquitinating enzyme 8 (189 aa).

Residues 1–103 enclose the OTU domain; the sequence is MMKSDGNCQF…GIHFNSIYKK (103 aa). Aspartate 5 is a catalytic residue. Cysteine 8 serves as the catalytic Nucleophile. Histidine 96 is a catalytic residue. The interval 105-189 is disordered; it reads KEKGSRSSSS…NRNHHFHYSE (85 aa). A coiled-coil region spans residues 120-181; the sequence is WMKLQRKKEN…KKEKKEKKNR (62 aa). 2 consecutive short sequence motifs (nuclear localization signal) follow at residues 125–132 and 163–170; these read RKKENEAK and KKKAKVQK. Basic and acidic residues predominate over residues 126–174; sequence KKENEAKKKEEEEKERKDMEKEEKKKDKEDKKKDKEDKKKAKVQKEKKE. Residues 175 to 189 are compositionally biased toward basic residues; the sequence is KKEKKNRNHHFHYSE.

The protein belongs to the peptidase C85 family.

It localises to the nucleus. It catalyses the reaction Thiol-dependent hydrolysis of ester, thioester, amide, peptide and isopeptide bonds formed by the C-terminal Gly of ubiquitin (a 76-residue protein attached to proteins as an intracellular targeting signal).. In terms of biological role, hydrolase that can remove conjugated ubiquitin from proteins in vitro and may therefore play an important regulatory role at the level of protein turnover by preventing degradation. The polypeptide is Putative OVARIAN TUMOR DOMAIN-containing deubiquitinating enzyme 8 (Arabidopsis thaliana (Mouse-ear cress)).